Here is an 87-residue protein sequence, read N- to C-terminus: Beta-toxin Cn5 (87 aa).

A signal peptide spans 1–19; the sequence is MNSLLMITACLFLIGTVWA. The region spanning 20–85 is the LCN-type CS-alpha/beta domain; the sequence is KEGYLVNKST…TYPLPNKSCS (66 aa). 4 disulfide bridges follow: C31/C84, C35/C60, C44/C65, and C48/C67.

It belongs to the long (4 C-C) scorpion toxin superfamily. Sodium channel inhibitor family. Beta subfamily. In terms of tissue distribution, expressed by the venom gland.

It localises to the secreted. Beta toxins bind voltage-independently at site-4 of sodium channels (Nav) and shift the voltage of activation toward more negative potentials thereby affecting sodium channel activation and promoting spontaneous and repetitive firing. This toxin is lethal to crustaceans (freshwater crayfish (Cambarellus montezumae spp.)), it provokes a reversible paralysis to insects (crickets (Achaeta spp.)), but is not toxic to mice. At high concentrations, it does displace the (beta) mammal-specific toxin Cn2 from rat brain synaptosomes. In Centruroides noxius (Mexican scorpion), this protein is Beta-toxin Cn5.